Reading from the N-terminus, the 271-residue chain is 3-methyl-2-oxobutanoate hydroxymethyltransferase (271 aa).

2 residues coordinate Mg(2+): Asp51 and Asp90. Residues 51–52, Asp90, and Lys118 contribute to the 3-methyl-2-oxobutanoate site; that span reads DS. Glu120 serves as a coordination point for Mg(2+). Catalysis depends on Glu186, which acts as the Proton acceptor.

The protein belongs to the PanB family. Homodecamer; pentamer of dimers. The cofactor is Mg(2+).

It is found in the cytoplasm. It carries out the reaction 3-methyl-2-oxobutanoate + (6R)-5,10-methylene-5,6,7,8-tetrahydrofolate + H2O = 2-dehydropantoate + (6S)-5,6,7,8-tetrahydrofolate. Its pathway is cofactor biosynthesis; (R)-pantothenate biosynthesis; (R)-pantoate from 3-methyl-2-oxobutanoate: step 1/2. Functionally, catalyzes the reversible reaction in which hydroxymethyl group from 5,10-methylenetetrahydrofolate is transferred onto alpha-ketoisovalerate to form ketopantoate. The chain is 3-methyl-2-oxobutanoate hydroxymethyltransferase from Stenotrophomonas maltophilia (strain R551-3).